Here is a 157-residue protein sequence, read N- to C-terminus: uncharacterized protein (157 aa).

Positions 1–157 (MNRGPPLRSR…SFSFLVPSNS (157 aa)) are disordered. Positions 8-31 (RSRPPSSPPPASAFPGPSPFPSPS) are enriched in pro residues. The span at 62–71 (RTSHPPRCPH) shows a compositional bias: basic residues. Pro residues predominate over residues 76 to 95 (PSAPSPPFTPPHPLPTPTPS). Low complexity-rich tracts occupy residues 96 to 117 (SSPR…SLAS) and 124 to 157 (SFSS…PSNS).

This is an uncharacterized protein from Vitis vinifera (Grape).